A 134-amino-acid polypeptide reads, in one-letter code: DNA-binding protein H-NS (134 aa).

A DNA-binding region spans residues glutamine 111–alanine 116.

The protein belongs to the histone-like protein H-NS family. In terms of assembly, homodimer that oligomerizes on DNA into higher-order complexes that form bridges between disparate regions of DNA compacting it. Interacts with YmoA and other similar proteins.

The protein localises to the cytoplasm. It is found in the nucleoid. Its function is as follows. A DNA-binding protein implicated in transcriptional repression and chromosome organization and compaction. Binds nucleation sites in AT-rich DNA and bridges them, forming higher-order nucleoprotein complexes and condensing the chromosome. As many horizontally transferred genes are AT-rich, it plays a central role in silencing foreign genes. A subset of genes are repressed by H-NS in association with other proteins. This chain is DNA-binding protein H-NS (hns), found in Proteus vulgaris.